Reading from the N-terminus, the 140-residue chain is Cystatin-like 1 (140 aa).

The signal sequence occupies residues 1-23 (MEMKARGLRIPLLLLLVTVVVMA). A Cystatin domain is found at 32–126 (GGFKEKAMSK…CKSLIYSVPW (95 aa)). A glycan (N-linked (GlcNAc...) asparagine) is linked at Asn45. 2 cysteine pairs are disulfide-bonded: Cys94–Cys104 and Cys117–Cys137.

Belongs to the cystatin family. Highly expressed in testis where it localizes to spermatogonium, spermatocyes and round spermatids. Not detected in spermatozoa. Also detected in epididymis, cerebrum and pituitary.

The protein resides in the secreted. The chain is Cystatin-like 1 from Mus musculus (Mouse).